The following is a 381-amino-acid chain: Creatine kinase B-type (381 aa).

Serine 4 is subject to Phosphoserine. Positions 11–98 (KLRFPAEDEF…FDPIIEDRHG (88 aa)) constitute a Phosphagen kinase N-terminal domain. Threonine 35 is modified (phosphothreonine). Residue lysine 45 forms a Glycyl lysine isopeptide (Lys-Gly) (interchain with G-Cter in ubiquitin) linkage. Valine 72 contacts creatine. A compositionally biased stretch (basic and acidic residues) spans 96–110 (RHGGYKPSDEHKTDL). A disordered region spans residues 96-123 (RHGGYKPSDEHKTDLNPDNLQGGDDLDP). Glycyl lysine isopeptide (Lys-Gly) (interchain with G-Cter in ubiquitin) cross-links involve residues lysine 101 and lysine 107. The residue at position 125 (tyrosine 125) is a Phosphotyrosine. The 243-residue stretch at 125 to 367 (YVLSSRVRTG…KLLIEMEQRL (243 aa)) folds into the Phosphagen kinase C-terminal domain. ATP-binding positions include 128–132 (SSRVR), arginine 130, arginine 132, and histidine 191. The internal MTS-like signal stretch occupies residues 130 to 138 (RVRTGRSIR). Serine 199 carries the phosphoserine modification. Residue glutamate 232 coordinates creatine. An ATP-binding site is contributed by arginine 236. The residue at position 269 (tyrosine 269) is a 3'-nitrotyrosine. Residue serine 285 coordinates creatine. Arginine 292 is a binding site for ATP. Serine 309 is modified (phosphoserine). Residues arginine 320, 320–325 (RGTGGV), and aspartate 335 contribute to the ATP site. Position 322 is a phosphothreonine (threonine 322). Lysine 381 is covalently cross-linked (Glycyl lysine isopeptide (Lys-Gly) (interchain with G-Cter in ubiquitin)).

Belongs to the ATP:guanido phosphotransferase family. Dimer of identical or non-identical chains, which can be either B (brain type) or M (muscle type). With MM being the major form in skeletal muscle and myocardium, MB existing in myocardium, and BB existing in many tissues, especially brain. Interacts with SLC12A6 (via C-terminus); the interaction may be required for SLC12A6 potassium-chloride cotransport activity. In terms of processing, ubiquitinated by the ECS(ASB9) complex, leading to its degradation by the proteasome.

The protein localises to the cytoplasm. The protein resides in the cytosol. It localises to the mitochondrion. It is found in the cell membrane. It catalyses the reaction creatine + ATP = N-phosphocreatine + ADP + H(+). Its function is as follows. Reversibly catalyzes the transfer of phosphate between ATP and various phosphogens (e.g. creatine phosphate). Creatine kinase isoenzymes play a central role in energy transduction in tissues with large, fluctuating energy demands, such as skeletal muscle, heart, brain and spermatozoa. Acts as a key regulator of adaptive thermogenesis as part of the futile creatine cycle: localizes to the mitochondria of thermogenic fat cells and acts by mediating phosphorylation of creatine to initiate a futile cycle of creatine phosphorylation and dephosphorylation. During the futile creatine cycle, creatine and N-phosphocreatine are in a futile cycle, which dissipates the high energy charge of N-phosphocreatine as heat without performing any mechanical or chemical work. The sequence is that of Creatine kinase B-type (CKB) from Oryctolagus cuniculus (Rabbit).